A 135-amino-acid polypeptide reads, in one-letter code: C-type lectin BpLec (135 aa).

4 disulfides stabilise this stretch: cysteine 3/cysteine 14, cysteine 31/cysteine 131, cysteine 38/cysteine 133, and cysteine 106/cysteine 123. One can recognise a C-type lectin domain in the interval 10–132; sequence MNGLCYKIFD…CESKNAFLCQ (123 aa). Glutamine 96, aspartate 98, glutamate 104, asparagine 119, and aspartate 120 together coordinate Ca(2+). Residues 96 to 98 carry the Galactose-binding motif; that stretch reads QPD.

Belongs to the true venom lectin family. As to quaternary structure, homodimer; disulfide-linked. As to expression, expressed by the venom gland.

It is found in the secreted. Its function is as follows. This lectin displays hemagglutinating activity on dog (128'000 HU/mg) and cat erythrocytes, that is inhibited by beta-galactosides (D-galactose, D-lactose, and N-acetyl-D-galactosamine) and EDTA. In addition, has been shown to hemagglutinate promastigote forms of Leishmania amazonensis. Also inhibits Gram-positive (S.aureus ATCC 25923) (MIC is 31.25 ug/ml) but not Gram-negative (E.coli ATCC 25922) bacteria. Is a calcium-dependent lectin. This is C-type lectin BpLec from Bothrops pauloensis (Neuwied's lancehead).